The primary structure comprises 205 residues: Small ribosomal subunit protein uS4 (205 aa).

Over residues 1–12 (MSKRIQAKHKLD) the composition is skewed to basic residues. Residues 1–49 (MSKRIQAKHKLDRRMGQNIWGRPKSPVNRREYGPGQHGQRRKGKLSDFG) form a disordered region. Residues 94 to 156 (RRLDAVIYRA…SKQLEIVVVA (63 aa)) form the S4 RNA-binding domain.

This sequence belongs to the universal ribosomal protein uS4 family. Part of the 30S ribosomal subunit. Contacts protein S5. The interaction surface between S4 and S5 is involved in control of translational fidelity.

Its function is as follows. One of the primary rRNA binding proteins, it binds directly to 16S rRNA where it nucleates assembly of the body of the 30S subunit. With S5 and S12 plays an important role in translational accuracy. The chain is Small ribosomal subunit protein uS4 from Methylobacterium nodulans (strain LMG 21967 / CNCM I-2342 / ORS 2060).